Reading from the N-terminus, the 405-residue chain is Probable tRNA sulfurtransferase (405 aa).

Residues 60-165 (VPVAESLKQI…EEAAYLSYEN (106 aa)) enclose the THUMP domain. ATP-binding positions include 183–184 (ML), 208–209 (HF), arginine 265, glycine 287, and glutamine 296.

Belongs to the ThiI family.

It localises to the cytoplasm. The enzyme catalyses [ThiI sulfur-carrier protein]-S-sulfanyl-L-cysteine + a uridine in tRNA + 2 reduced [2Fe-2S]-[ferredoxin] + ATP + H(+) = [ThiI sulfur-carrier protein]-L-cysteine + a 4-thiouridine in tRNA + 2 oxidized [2Fe-2S]-[ferredoxin] + AMP + diphosphate. It catalyses the reaction [ThiS sulfur-carrier protein]-C-terminal Gly-Gly-AMP + S-sulfanyl-L-cysteinyl-[cysteine desulfurase] + AH2 = [ThiS sulfur-carrier protein]-C-terminal-Gly-aminoethanethioate + L-cysteinyl-[cysteine desulfurase] + A + AMP + 2 H(+). The protein operates within cofactor biosynthesis; thiamine diphosphate biosynthesis. Catalyzes the ATP-dependent transfer of a sulfur to tRNA to produce 4-thiouridine in position 8 of tRNAs, which functions as a near-UV photosensor. Also catalyzes the transfer of sulfur to the sulfur carrier protein ThiS, forming ThiS-thiocarboxylate. This is a step in the synthesis of thiazole, in the thiamine biosynthesis pathway. The sulfur is donated as persulfide by IscS. The protein is Probable tRNA sulfurtransferase of Streptococcus mutans serotype c (strain ATCC 700610 / UA159).